Consider the following 224-residue polypeptide: UPF0111 protein CT_691 (224 aa).

The protein belongs to the UPF0111 family.

This is UPF0111 protein CT_691 from Chlamydia trachomatis serovar D (strain ATCC VR-885 / DSM 19411 / UW-3/Cx).